The chain runs to 160 residues: Cytochrome c-type biogenesis protein CcmE (160 aa).

Over 1–9 (MRGLKKKRR) the chain is Cytoplasmic. The chain crosses the membrane as a helical; Signal-anchor for type II membrane protein span at residues 10 to 30 (IQIIAIAAVALTIATIMIGTA). The Periplasmic segment spans residues 31–160 (MRDGINFFRS…DGGYGGASGS (130 aa)). Residues H123 and Y127 each contribute to the heme site. Positions 141 to 160 (VYKDPNATDADGGYGGASGS) are disordered.

It belongs to the CcmE/CycJ family.

It localises to the cell inner membrane. In terms of biological role, heme chaperone required for the biogenesis of c-type cytochromes. Transiently binds heme delivered by CcmC and transfers the heme to apo-cytochromes in a process facilitated by CcmF and CcmH. The sequence is that of Cytochrome c-type biogenesis protein CcmE from Dinoroseobacter shibae (strain DSM 16493 / NCIMB 14021 / DFL 12).